We begin with the raw amino-acid sequence, 526 residues long: Protein translocase subunit SecD (526 aa).

6 helical membrane passes run 8–28 (LIVF…SLLE), 356–376 (IIAL…YYSM), 379–399 (VIAC…MAIF), 405–425 (LPGM…NIII), 453–473 (AIFD…AYGT), and 478–498 (GFAL…IIGT).

The protein belongs to the SecD/SecF family. SecD subfamily. As to quaternary structure, forms a complex with SecF. Part of the essential Sec protein translocation apparatus which comprises SecA, SecYEG and auxiliary proteins SecDF-YajC and YidC.

It is found in the cell inner membrane. Functionally, part of the Sec protein translocase complex. Interacts with the SecYEG preprotein conducting channel. SecDF uses the proton motive force (PMF) to complete protein translocation after the ATP-dependent function of SecA. The sequence is that of Protein translocase subunit SecD from Helicobacter pylori (strain J99 / ATCC 700824) (Campylobacter pylori J99).